A 455-amino-acid chain; its full sequence is Kynurenine 3-monooxygenase (455 aa).

The protein belongs to the aromatic-ring hydroxylase family. KMO subfamily. It depends on FAD as a cofactor.

It catalyses the reaction L-kynurenine + NADPH + O2 + H(+) = 3-hydroxy-L-kynurenine + NADP(+) + H2O. It functions in the pathway cofactor biosynthesis; NAD(+) biosynthesis; quinolinate from L-kynurenine: step 1/3. In terms of biological role, catalyzes the hydroxylation of L-kynurenine (L-Kyn) to form 3-hydroxy-L-kynurenine (L-3OHKyn). Required for synthesis of quinolinic acid. The polypeptide is Kynurenine 3-monooxygenase (Xanthomonas euvesicatoria pv. vesicatoria (strain 85-10) (Xanthomonas campestris pv. vesicatoria)).